An 83-amino-acid chain; its full sequence is ATP synthase subunit c, chloroplastic (83 aa).

2 helical membrane-spanning segments follow: residues 3–23 and 57–77; these read PIIS…AAIG and LAFM…LLFA.

The protein belongs to the ATPase C chain family. As to quaternary structure, F-type ATPases have 2 components, F(1) - the catalytic core - and F(0) - the membrane proton channel. F(1) has five subunits: alpha(3), beta(3), gamma(1), delta(1), epsilon(1). F(0) has four main subunits: a(1), b(1), b'(1) and c(10-14). The alpha and beta chains form an alternating ring which encloses part of the gamma chain. F(1) is attached to F(0) by a central stalk formed by the gamma and epsilon chains, while a peripheral stalk is formed by the delta, b and b' chains.

Its subcellular location is the plastid. It is found in the chloroplast thylakoid membrane. Its function is as follows. F(1)F(0) ATP synthase produces ATP from ADP in the presence of a proton or sodium gradient. F-type ATPases consist of two structural domains, F(1) containing the extramembraneous catalytic core and F(0) containing the membrane proton channel, linked together by a central stalk and a peripheral stalk. During catalysis, ATP synthesis in the catalytic domain of F(1) is coupled via a rotary mechanism of the central stalk subunits to proton translocation. Key component of the F(0) channel; it plays a direct role in translocation across the membrane. A homomeric c-ring of between 10-14 subunits forms the central stalk rotor element with the F(1) delta and epsilon subunits. The sequence is that of ATP synthase subunit c, chloroplastic from Diacronema lutheri (Unicellular marine alga).